We begin with the raw amino-acid sequence, 216 residues long: PMKEVSIRGQGSLAYPGLRTQGNLETLNGPNDATRGLTSLADTFEHVIEELLDEQQVIQPSKENKDADLYSSRVMLSSQVPLEPPLLFLLEEYKNYLDAANMSMRVRRHSDPARRGELSVCDSTSEWVTAAEKKTAVDMSGATVTVLEKVPVPKGQLKQYFYETKCSSKGYAKEGCRGIDKRYWNSQCRTTQSYVRALTMDNKKRVGWRFIRIDTS.

Positions P1–R108 are excised as a propeptide. Residue N101 is glycosylated (N-linked (GlcNAc...) asparagine). Residues C121 and C188 are joined by a disulfide bond.

This sequence belongs to the NGF-beta family.

The protein localises to the secreted. Functionally, promotes the survival of neuronal populations that are all located either in the central nervous system or directly connected to it. This is Neurotrophic factor BDNF precursor form (BDNF) from Cylindrophis ruffus (Red-tailed pipe snake).